The following is a 39-amino-acid chain: Natriuretic peptide PaNP-d (39 aa).

A propeptide spanning residues 1-8 is cleaved from the precursor; sequence SGSKTAEI. A disordered region spans residues 1 to 39; sequence SGSKTAEIDDGCFGLPLDPIGSTSGMGCRSVPKPIPGGS. Residues C12 and C28 are joined by a disulfide bond.

The protein belongs to the natriuretic peptide family. Expressed by the venom gland.

It is found in the secreted. Functionally, snake venom natriuretic peptide that targets both NPR1 and NPR2. Exhibits hypotensive and vasodepressor activities. This is Natriuretic peptide PaNP-d from Pseudechis australis (Mulga snake).